A 267-amino-acid chain; its full sequence is Cytochrome b (267 aa).

Transmembrane regions (helical) follow at residues 4–24 (FGSL…LLAA), 48–69 (WLIR…YLHI), 84–104 (WNTG…GYVL), and 149–169 (FFTL…IHLT). Residues H54 and H68 each contribute to the heme b site. Residues H153 and H167 each coordinate heme b. H172 contributes to the a ubiquinone binding site. 2 helical membrane-spanning segments follow: residues 197–217 (LKDI…ALFA) and 259–267 (LGGVLALAA).

Belongs to the cytochrome b family. As to quaternary structure, the cytochrome bc1 complex contains 11 subunits: 3 respiratory subunits (MT-CYB, CYC1 and UQCRFS1), 2 core proteins (UQCRC1 and UQCRC2) and 6 low-molecular weight proteins (UQCRH/QCR6, UQCRB/QCR7, UQCRQ/QCR8, UQCR10/QCR9, UQCR11/QCR10 and a cleavage product of UQCRFS1). This cytochrome bc1 complex then forms a dimer. Heme b serves as cofactor.

The protein localises to the mitochondrion inner membrane. Its function is as follows. Component of the ubiquinol-cytochrome c reductase complex (complex III or cytochrome b-c1 complex) that is part of the mitochondrial respiratory chain. The b-c1 complex mediates electron transfer from ubiquinol to cytochrome c. Contributes to the generation of a proton gradient across the mitochondrial membrane that is then used for ATP synthesis. The sequence is that of Cytochrome b (MT-CYB) from Raphus cucullatus (Dodo).